A 423-amino-acid polypeptide reads, in one-letter code: Hemoglobinase (423 aa).

Residues 1 to 18 (MFYSIFFIHILRIVLVDC) form the signal peptide. Positions 19-29 (NEYSEENVDDR) are excised as a propeptide. Active-site residues include histidine 145 and cysteine 186. The disordered stretch occupies residues 286 to 307 (RKKASTEHDEPPMKPKDSIPSR). Residues 286–423 (RKKASTEHDE…INGVIRKVCG (138 aa)) constitute a propeptide that is removed on maturation. Positions 289–305 (ASTEHDEPPMKPKDSIP) are enriched in basic and acidic residues.

Belongs to the peptidase C13 family. In terms of tissue distribution, gut.

The catalysed reaction is Hydrolysis of proteins and small molecule substrates at -Asn-|-Xaa- bonds.. Its function is as follows. This protease is used by the parasite for degradation of the host globin. In Schistosoma japonicum (Blood fluke), this protein is Hemoglobinase (HAEM).